A 398-amino-acid polypeptide reads, in one-letter code: Phosphoglycerate kinase (398 aa).

Substrate contacts are provided by residues 21–23, R36, 59–62, R119, and R157; these read DFN and HLGR. ATP contacts are provided by residues K208, G296, E327, and 354–357; that span reads GGDS.

It belongs to the phosphoglycerate kinase family. Monomer.

It is found in the cytoplasm. It carries out the reaction (2R)-3-phosphoglycerate + ATP = (2R)-3-phospho-glyceroyl phosphate + ADP. It participates in carbohydrate degradation; glycolysis; pyruvate from D-glyceraldehyde 3-phosphate: step 2/5. In Streptococcus pyogenes serotype M1, this protein is Phosphoglycerate kinase (pgk).